Reading from the N-terminus, the 201-residue chain is Recombination protein RecR (201 aa).

The segment at C57 to C72 adopts a C4-type zinc-finger fold. Positions G81–P176 constitute a Toprim domain.

Belongs to the RecR family.

May play a role in DNA repair. It seems to be involved in an RecBC-independent recombinational process of DNA repair. It may act with RecF and RecO. This Salmonella choleraesuis (strain SC-B67) protein is Recombination protein RecR.